The following is a 508-amino-acid chain: Photosystem II CP47 reaction center protein (508 aa).

Helical transmembrane passes span 21–36 (SVHI…WAGS), 101–115 (IVFS…IWHW), 140–156 (GIHL…FGAF), 203–218 (IAAG…FHLS), 237–252 (VLSS…AFVV), and 457–472 (SFAL…HGAR).

The protein belongs to the PsbB/PsbC family. PsbB subfamily. PSII is composed of 1 copy each of membrane proteins PsbA, PsbB, PsbC, PsbD, PsbE, PsbF, PsbH, PsbI, PsbJ, PsbK, PsbL, PsbM, PsbT, PsbX, PsbY, PsbZ, Psb30/Ycf12, at least 3 peripheral proteins of the oxygen-evolving complex and a large number of cofactors. It forms dimeric complexes. Binds multiple chlorophylls. PSII binds additional chlorophylls, carotenoids and specific lipids. is required as a cofactor.

The protein resides in the plastid. It localises to the chloroplast thylakoid membrane. Functionally, one of the components of the core complex of photosystem II (PSII). It binds chlorophyll and helps catalyze the primary light-induced photochemical processes of PSII. PSII is a light-driven water:plastoquinone oxidoreductase, using light energy to abstract electrons from H(2)O, generating O(2) and a proton gradient subsequently used for ATP formation. This Aethionema cordifolium (Lebanon stonecress) protein is Photosystem II CP47 reaction center protein.